The following is a 528-amino-acid chain: Equilibrative nucleoside transporter 4 (528 aa).

Over methionine 1–histidine 68 the chain is Extracellular. Residues alanine 69–isoleucine 89 traverse the membrane as a helical segment. The Cytoplasmic segment spans residues threonine 90 to glycine 101. The helical transmembrane segment at threonine 102–leucine 122 threads the bilayer. At asparagine 123–glycine 139 the chain is on the extracellular side. The helical transmembrane segment at tyrosine 140–phenylalanine 160 threads the bilayer. Residues serine 161 to tyrosine 166 are Cytoplasmic-facing. A helical membrane pass occupies residues alanine 167–phenylalanine 187. Residues tyrosine 188 to threonine 231 are Extracellular-facing. A helical transmembrane segment spans residues isoleucine 232–valine 252. The Cytoplasmic portion of the chain corresponds to arginine 253–arginine 346. The chain crosses the membrane as a helical span at residues valine 347–proline 367. Over glycine 368–cysteine 376 the chain is Extracellular. A helical membrane pass occupies residues valine 377–glycine 397. The Cytoplasmic segment spans residues lysine 398–histidine 411. Residues leucine 412 to proline 432 form a helical membrane-spanning segment. Residues serine 433–cysteine 445 are Extracellular-facing. Residues valine 446 to alanine 466 traverse the membrane as a helical segment. Residues alanine 467–threonine 481 are Cytoplasmic-facing. Residues methionine 482 to threonine 504 form a helical membrane-spanning segment. The Extracellular portion of the chain corresponds to arginine 505 to proline 528. A glycan (N-linked (GlcNAc...) asparagine) is linked at asparagine 521.

The protein belongs to the SLC29A/ENT transporter (TC 2.A.57) family. Post-translationally, N-glycosylated. As to expression, expressed in heart. Expressed in choroid plexus.

The protein localises to the cell membrane. The protein resides in the apical cell membrane. It catalyses the reaction serotonin(out) = serotonin(in). The catalysed reaction is dopamine(out) = dopamine(in). The enzyme catalyses (R)-noradrenaline(out) = (R)-noradrenaline(in). It carries out the reaction (R)-adrenaline(out) = (R)-adrenaline(in). It catalyses the reaction histamine(out) = histamine(in). The catalysed reaction is tyramine(in) = tyramine(out). The enzyme catalyses guanidine(out) = guanidine(in). It carries out the reaction adenine(out) = adenine(in). It catalyses the reaction adenosine(in) = adenosine(out). Activated at acidic pH. Functionally, electrogenic voltage-dependent transporter that mediates the transport of a variety of endogenous bioactive amines, cationic xenobiotics and drugs. Utilizes the physiologic inside-negative membrane potential as a driving force to facilitate cellular uptake of organic cations. Functions as a Na(+)- and Cl(-)-independent bidirectional transporter. Substrate transport is pH-dependent and enhanced under acidic condition, which is most likely the result of allosteric changes in the transporter structure. Implicated in monoamine neurotransmitters uptake such as serotonin, dopamine, adrenaline/epinephrine, noradrenaline/norepinephrine, histamine and tyramine, thereby supporting a role in homeostatic regulation of aminergic neurotransmission in the central nervous system. Also responsible for the uptake of bioactive amines and drugs through the blood-cerebrospinal fluid (CSF) barrier, from the CSF into choroid plexus epithelial cells, thereby playing a significant role in the clearance of cationic neurotoxins, xenobiotics and metabolic waste in the brain. Involved in bidirectional transport of the purine nucleoside adenosine and plays a role in the regulation of extracellular adenosine concentrations in cardiac tissues, in particular during ischemia. May be involved in organic cation uptake from the tubular lumen into renal tubular cells, thereby contributing to organic cation reabsorption in the kidney. Also transports adenine and guanidine. This chain is Equilibrative nucleoside transporter 4, found in Mus musculus (Mouse).